Reading from the N-terminus, the 436-residue chain is Trigger factor (436 aa).

The PPIase FKBP-type domain maps to 161-246; it reads DDQLNIDFVG…VNSVSEPKLP (86 aa).

Belongs to the FKBP-type PPIase family. Tig subfamily.

The protein localises to the cytoplasm. The catalysed reaction is [protein]-peptidylproline (omega=180) = [protein]-peptidylproline (omega=0). In terms of biological role, involved in protein export. Acts as a chaperone by maintaining the newly synthesized protein in an open conformation. Functions as a peptidyl-prolyl cis-trans isomerase. The protein is Trigger factor of Pseudomonas fluorescens (strain ATCC BAA-477 / NRRL B-23932 / Pf-5).